The following is an 81-amino-acid chain: Omega-conotoxin-like TxMKLT1-0223 (81 aa).

An N-terminal signal peptide occupies residues 1–22 (MKLTCMMIVAVLFLTAWTFVTA). A propeptide spanning residues 23–52 (VPHSSNALENLYLKARHEMENPEASKLNTR) is cleaved from the precursor. Cystine bridges form between C55–C72, C62–C76, and C71–C80.

This sequence belongs to the conotoxin O1 superfamily. In terms of tissue distribution, expressed by the venom duct.

The protein localises to the secreted. Omega-conotoxins act at presynaptic membranes, they bind and block voltage-gated calcium channels (Cav). The protein is Omega-conotoxin-like TxMKLT1-0223 of Conus textile (Cloth-of-gold cone).